We begin with the raw amino-acid sequence, 163 residues long: Nucleotide-binding protein YPDSF_2805 (163 aa).

It belongs to the YajQ family.

Nucleotide-binding protein. The polypeptide is Nucleotide-binding protein YPDSF_2805 (Yersinia pestis (strain Pestoides F)).